The chain runs to 123 residues: MPTINQLVRKGREPQKAKSKVPAMEQNPQKRGVCTRVYTTTPKKPNSALRKVAKIRLTNSREVISYIPGEGHNLQEHSVVLIRGGRVRDLPGVRYHVLRGVLDTQGVKDRKQSRSKYGAKRPK.

A disordered region spans residues 1-29 (MPTINQLVRKGREPQKAKSKVPAMEQNPQ). Asp89 carries the post-translational modification 3-methylthioaspartic acid.

This sequence belongs to the universal ribosomal protein uS12 family. Part of the 30S ribosomal subunit. Contacts proteins S8 and S17. May interact with IF1 in the 30S initiation complex.

Functionally, with S4 and S5 plays an important role in translational accuracy. Interacts with and stabilizes bases of the 16S rRNA that are involved in tRNA selection in the A site and with the mRNA backbone. Located at the interface of the 30S and 50S subunits, it traverses the body of the 30S subunit contacting proteins on the other side and probably holding the rRNA structure together. The combined cluster of proteins S8, S12 and S17 appears to hold together the shoulder and platform of the 30S subunit. This chain is Small ribosomal subunit protein uS12, found in Novosphingobium aromaticivorans (strain ATCC 700278 / DSM 12444 / CCUG 56034 / CIP 105152 / NBRC 16084 / F199).